The following is a 72-amino-acid chain: MKKKIHPRYSKITATCSCGNIIEIFSTINHNLNLDICAKCHPFYTGKQRVIDTGGRVERFKKRFKFTKQELN.

Zn(2+)-binding residues include Cys-16, Cys-18, Cys-37, and Cys-40.

Belongs to the bacterial ribosomal protein bL31 family. Type A subfamily. As to quaternary structure, part of the 50S ribosomal subunit. The cofactor is Zn(2+).

In terms of biological role, binds the 23S rRNA. The polypeptide is Large ribosomal subunit protein bL31 (Buchnera aphidicola subsp. Acyrthosiphon pisum (strain APS) (Acyrthosiphon pisum symbiotic bacterium)).